A 1312-amino-acid chain; its full sequence is DNA repair protein RAD50 (1312 aa).

Arg-13, Asn-36, Gly-37, Gly-39, Lys-40, Thr-41, Thr-42, Ile-65, Asp-67, and Gln-158 together coordinate ATP. Residue Thr-41 coordinates Mg(2+). Position 158 (Gln-158) interacts with Mg(2+). Coiled coils occupy residues 185 to 347 (TKAL…LIRR) and 403 to 558 (QDLT…LQND). Position 469 is a phosphoserine (Ser-469). Thr-568 is modified (phosphothreonine). Residues 640–678 (DCTIDEYNDVLEETELSYKTALENLKMHQTTLEFNRKAL) adopt a coiled-coil conformation. Residues 640–741 (DCTIDEYNDV…SLRLLEKHII (102 aa)) enclose the Zinc-hook domain. Positions 687 and 690 each coordinate Zn(2+). 2 coiled-coil regions span residues 712 to 741 (DANF…KHII) and 787 to 1108 (LAES…DIEK).

Belongs to the SMC family. RAD50 subfamily. In terms of assembly, component of the MRN complex composed of two heterodimers RAD50 and MRE11 associated with a single XRS2. The MRN complexes dimerize on DNA to form joined MRN-MRN oligomers required for DNA double-strand break repair. It depends on Zn(2+) as a cofactor.

The protein localises to the nucleus. Its subcellular location is the chromosome. It carries out the reaction ATP + H2O = ADP + phosphate + H(+). In terms of biological role, component of the MRN complex, which plays a central role in double-strand break (DSB) repair, DNA recombination, maintenance of telomere integrity and meiosis. The MRN complex is involved in the repair of DNA double-strand breaks (DSBs) via homologous recombination (HR), an error-free mechanism which primarily occurs during S and G2 phases. The complex (1) mediates the end resection of damaged DNA, which generates proper single-stranded DNA, a key initial steps in HR, and is (2) required for the recruitment of other repair factors and efficient activation of TEL1/ATM and ATR upon DNA damage. The MRN complex possesses single-strand endonuclease activity and double-strand-specific 3'-5' exonuclease activity, which are provided by MRE11, to initiate end resection, which is required for single-strand invasion and recombination. Within the complex, RAD50 is both required to bind DNA ends and hold them in close proximity and regulate the activity of MRE11. RAD50 provides an ATP-dependent control of MRE11 by positioning DNA ends into the MRE11 active site: ATP-binding induces a large structural change from an open form with accessible MRE11 nuclease sites into a closed form. The MRN complex is also required for the processing of R-loops. The sequence is that of DNA repair protein RAD50 from Saccharomyces cerevisiae (strain ATCC 204508 / S288c) (Baker's yeast).